We begin with the raw amino-acid sequence, 92 residues long: CRISPR-associated endoribonuclease Cas2 2 (92 aa).

Residue aspartate 12 coordinates Mg(2+).

It belongs to the CRISPR-associated endoribonuclease Cas2 protein family. Homodimer, forms a heterotetramer with a Cas1 homodimer. It depends on Mg(2+) as a cofactor.

CRISPR (clustered regularly interspaced short palindromic repeat), is an adaptive immune system that provides protection against mobile genetic elements (viruses, transposable elements and conjugative plasmids). CRISPR clusters contain sequences complementary to antecedent mobile elements and target invading nucleic acids. CRISPR clusters are transcribed and processed into CRISPR RNA (crRNA). Functions as a ssRNA-specific endoribonuclease. Involved in the integration of spacer DNA into the CRISPR cassette. In Archaeoglobus fulgidus (strain ATCC 49558 / DSM 4304 / JCM 9628 / NBRC 100126 / VC-16), this protein is CRISPR-associated endoribonuclease Cas2 2 (cas22).